An 872-amino-acid polypeptide reads, in one-letter code: DNA mismatch repair protein MutS (872 aa).

Residue glycine 602–serine 609 coordinates ATP.

This sequence belongs to the DNA mismatch repair MutS family.

Its function is as follows. This protein is involved in the repair of mismatches in DNA. It is possible that it carries out the mismatch recognition step. This protein has a weak ATPase activity. The protein is DNA mismatch repair protein MutS of Staphylococcus aureus (strain Mu3 / ATCC 700698).